A 297-amino-acid chain; its full sequence is N-acetylneuraminate lyase (297 aa).

The aceneuramate site is built by Ser-47 and Thr-48. Tyr-137 serves as the catalytic Proton donor. Lys-165 serves as the catalytic Schiff-base intermediate with substrate. 5 residues coordinate aceneuramate: Thr-167, Gly-189, Asp-191, Glu-192, and Ser-208.

This sequence belongs to the DapA family. NanA subfamily. In terms of assembly, homotetramer.

Its subcellular location is the cytoplasm. It catalyses the reaction aceneuramate = aldehydo-N-acetyl-D-mannosamine + pyruvate. The protein operates within amino-sugar metabolism; N-acetylneuraminate degradation; D-fructose 6-phosphate from N-acetylneuraminate: step 1/5. Catalyzes the reversible aldol cleavage of N-acetylneuraminic acid (sialic acid; Neu5Ac) to form pyruvate and N-acetylmannosamine (ManNAc) via a Schiff base intermediate. This Salmonella typhimurium (strain LT2 / SGSC1412 / ATCC 700720) protein is N-acetylneuraminate lyase.